Reading from the N-terminus, the 142-residue chain is Putative pre-16S rRNA nuclease (142 aa).

Belongs to the YqgF nuclease family.

It localises to the cytoplasm. Could be a nuclease involved in processing of the 5'-end of pre-16S rRNA. The polypeptide is Putative pre-16S rRNA nuclease (Staphylococcus aureus (strain JH1)).